Consider the following 89-residue polypeptide: DNA-directed RNA polymerase subunit Rpo6 (89 aa).

The protein belongs to the archaeal Rpo6/eukaryotic RPB6 RNA polymerase subunit family. In terms of assembly, part of the RNA polymerase complex.

The protein localises to the cytoplasm. The catalysed reaction is RNA(n) + a ribonucleoside 5'-triphosphate = RNA(n+1) + diphosphate. DNA-dependent RNA polymerase (RNAP) catalyzes the transcription of DNA into RNA using the four ribonucleoside triphosphates as substrates. This is DNA-directed RNA polymerase subunit Rpo6 from Aeropyrum pernix (strain ATCC 700893 / DSM 11879 / JCM 9820 / NBRC 100138 / K1).